The primary structure comprises 1906 residues: Alpha-2-macroglobulin homolog (1906 aa).

The signal sequence occupies residues 1–21 (MIIRVCIRCFIVLTLVLGIGG). Cysteine 22 carries the N-palmitoyl cysteine lipid modification. Residue cysteine 22 is the site of S-diacylglycerol cysteine attachment.

The protein belongs to the protease inhibitor I39 (alpha-2-macroglobulin) family. Bacterial alpha-2-macroglobulin subfamily.

Its subcellular location is the cell membrane. The polypeptide is Alpha-2-macroglobulin homolog (Nostoc sp. (strain PCC 7120 / SAG 25.82 / UTEX 2576)).